The primary structure comprises 151 residues: Macrodomain Ter protein (151 aa).

This sequence belongs to the MatP family. In terms of assembly, homodimer.

The protein localises to the cytoplasm. In terms of biological role, required for spatial organization of the terminus region of the chromosome (Ter macrodomain) during the cell cycle. Prevents early segregation of duplicated Ter macrodomains during cell division. Binds specifically to matS, which is a 13 bp signature motif repeated within the Ter macrodomain. The polypeptide is Macrodomain Ter protein (Yersinia enterocolitica serotype O:8 / biotype 1B (strain NCTC 13174 / 8081)).